The following is a 205-amino-acid chain: Holliday junction branch migration complex subunit RuvA (205 aa).

The interval 1–64 (MIGRLRGVLV…EDAQLLYGFI (64 aa)) is domain I. Positions 65-143 (TKQERALFRL…SLLETSAGSE (79 aa)) are domain II. The tract at residues 144–156 (REFMLKSNYTPAP) is flexible linker. The interval 157 to 205 (VVNTAEEDAIAALLSLGYKPAQASKAVSAAFKEGMSSEDLIKSSLKSML) is domain III.

It belongs to the RuvA family. As to quaternary structure, homotetramer. Forms an RuvA(8)-RuvB(12)-Holliday junction (HJ) complex. HJ DNA is sandwiched between 2 RuvA tetramers; dsDNA enters through RuvA and exits via RuvB. An RuvB hexamer assembles on each DNA strand where it exits the tetramer. Each RuvB hexamer is contacted by two RuvA subunits (via domain III) on 2 adjacent RuvB subunits; this complex drives branch migration. In the full resolvosome a probable DNA-RuvA(4)-RuvB(12)-RuvC(2) complex forms which resolves the HJ.

The protein localises to the cytoplasm. Its function is as follows. The RuvA-RuvB-RuvC complex processes Holliday junction (HJ) DNA during genetic recombination and DNA repair, while the RuvA-RuvB complex plays an important role in the rescue of blocked DNA replication forks via replication fork reversal (RFR). RuvA specifically binds to HJ cruciform DNA, conferring on it an open structure. The RuvB hexamer acts as an ATP-dependent pump, pulling dsDNA into and through the RuvAB complex. HJ branch migration allows RuvC to scan DNA until it finds its consensus sequence, where it cleaves and resolves the cruciform DNA. The polypeptide is Holliday junction branch migration complex subunit RuvA (Shewanella woodyi (strain ATCC 51908 / MS32)).